Here is a 286-residue protein sequence, read N- to C-terminus: ATP synthase gamma chain (286 aa).

The protein belongs to the ATPase gamma chain family. In terms of assembly, F-type ATPases have 2 components, CF(1) - the catalytic core - and CF(0) - the membrane proton channel. CF(1) has five subunits: alpha(3), beta(3), gamma(1), delta(1), epsilon(1). CF(0) has three main subunits: a, b and c.

It is found in the cell membrane. Its function is as follows. Produces ATP from ADP in the presence of a proton gradient across the membrane. The gamma chain is believed to be important in regulating ATPase activity and the flow of protons through the CF(0) complex. This chain is ATP synthase gamma chain, found in Bacillus cereus (strain G9842).